A 234-amino-acid polypeptide reads, in one-letter code: UDP-2,3-diacylglucosamine hydrolase (234 aa).

Residues Asp-9, His-11, Asp-42, Asn-80, and His-115 each coordinate Mn(2+). 80 to 81 serves as a coordination point for substrate; it reads NR. The substrate site is built by Asp-123, Ser-161, Lys-165, Lys-168, and His-196. Mn(2+)-binding residues include His-196 and His-198.

The protein belongs to the LpxH family. Mn(2+) serves as cofactor.

Its subcellular location is the cell inner membrane. It carries out the reaction UDP-2-N,3-O-bis[(3R)-3-hydroxytetradecanoyl]-alpha-D-glucosamine + H2O = 2-N,3-O-bis[(3R)-3-hydroxytetradecanoyl]-alpha-D-glucosaminyl 1-phosphate + UMP + 2 H(+). Its pathway is glycolipid biosynthesis; lipid IV(A) biosynthesis; lipid IV(A) from (3R)-3-hydroxytetradecanoyl-[acyl-carrier-protein] and UDP-N-acetyl-alpha-D-glucosamine: step 4/6. Functionally, hydrolyzes the pyrophosphate bond of UDP-2,3-diacylglucosamine to yield 2,3-diacylglucosamine 1-phosphate (lipid X) and UMP by catalyzing the attack of water at the alpha-P atom. Involved in the biosynthesis of lipid A, a phosphorylated glycolipid that anchors the lipopolysaccharide to the outer membrane of the cell. The sequence is that of UDP-2,3-diacylglucosamine hydrolase from Histophilus somni (strain 2336) (Haemophilus somnus).